We begin with the raw amino-acid sequence, 94 residues long: Conotoxin Im026 (94 aa).

The N-terminal stretch at 1–24 (MRLTTMHSVILMLLLVFAFDNVDG) is a signal peptide. The propeptide occupies 25 to 59 (DEPGQTARDVDNRNFMSILRSEGKPVHFLRAIKKR).

In terms of processing, contains 4 disulfide bonds. As to expression, expressed by the venom duct.

The protein localises to the secreted. Probable neurotoxin. The sequence is that of Conotoxin Im026 from Conus imperialis (Imperial cone).